A 503-amino-acid chain; its full sequence is Annexin A11 (503 aa).

Composition is skewed to pro residues over residues 1 to 17 (MSYP…PPAP), 80 to 145 (GYPP…PYPG), and 155 to 169 (SPVP…PSYP). Disordered stretches follow at residues 1-35 (MSYP…MPPI) and 56-178 (AANM…GTVT). Annexin repeat units lie at residues 198–269 (FDPL…ALMK), 270–341 (TPIL…SLSQ), 353–425 (SLVQ…AVVK), and 429–500 (NTPA…KICG). Residues lysine 246 and lysine 253 each carry the N6-acetyllysine modification. Lysine 477 is subject to N6-acetyllysine.

The protein belongs to the annexin family. As to quaternary structure, interacts with PDCD6 in a calcium-dependent manner. Interacts with KIF23 during cytokinesis. Interacts with S100A6.

The protein resides in the cytoplasm. It localises to the melanosome. It is found in the nucleus envelope. The protein localises to the nucleus. Its subcellular location is the nucleoplasm. The protein resides in the cytoskeleton. It localises to the spindle. Functionally, required for midbody formation and completion of the terminal phase of cytokinesis. Binds specifically to calcyclin in a calcium-dependent manner. This is Annexin A11 (ANXA11) from Oryctolagus cuniculus (Rabbit).